A 179-amino-acid polypeptide reads, in one-letter code: Large ribosomal subunit protein uL6 (179 aa).

It belongs to the universal ribosomal protein uL6 family. Part of the 50S ribosomal subunit.

This protein binds to the 23S rRNA, and is important in its secondary structure. It is located near the subunit interface in the base of the L7/L12 stalk, and near the tRNA binding site of the peptidyltransferase center. The protein is Large ribosomal subunit protein uL6 of Clostridium novyi (strain NT).